The primary structure comprises 317 residues: ADP-L-glycero-D-manno-heptose-6-epimerase (317 aa).

Residues 10–11 (FI), 31–32 (DD), Gln38, Lys53, 75–79 (QGACS), and Asn92 each bind NADP(+). The active-site Proton acceptor is the Tyr139. Lys143 is an NADP(+) binding site. Substrate is bound at residue Asn166. Residues Val167 and Lys175 each coordinate NADP(+). Lys175 serves as the catalytic Proton acceptor. Substrate is bound by residues Gly177, His184, 198-201 (FEGV), Arg211, and Tyr275.

This sequence belongs to the NAD(P)-dependent epimerase/dehydratase family. HldD subfamily. Homopentamer. The cofactor is NADP(+).

It catalyses the reaction ADP-D-glycero-beta-D-manno-heptose = ADP-L-glycero-beta-D-manno-heptose. The protein operates within nucleotide-sugar biosynthesis; ADP-L-glycero-beta-D-manno-heptose biosynthesis; ADP-L-glycero-beta-D-manno-heptose from D-glycero-beta-D-manno-heptose 7-phosphate: step 4/4. In terms of biological role, catalyzes the interconversion between ADP-D-glycero-beta-D-manno-heptose and ADP-L-glycero-beta-D-manno-heptose via an epimerization at carbon 6 of the heptose. This is ADP-L-glycero-D-manno-heptose-6-epimerase from Shewanella frigidimarina (strain NCIMB 400).